A 1806-amino-acid polypeptide reads, in one-letter code: Atrochrysone carboxylic acid synthase (1806 aa).

Positions 30–283 (DLQGLFRRLY…SLPVYSGLCH (254 aa)) are N-terminal acylcarrier protein transacylase domain (SAT). The region spanning 416–850 (QSKIAIIGMS…GGNTTVCLEE (435 aa)) is the Ketosynthase family 3 (KS3) domain. Residues Cys-589, His-725, and His-768 each act as for beta-ketoacyl synthase activity in the active site. The segment at 951–1270 (FAFTGQGASY…SLTALHCAGV (320 aa)) is malonyl-CoA:ACP transacylase (MAT) domain. The product template (PT) domain stretch occupies residues 1340–1659 (TSTVQQIIEE…RILLNRFFTA (320 aa)). The interval 1344 to 1479 (QQIIEESFNG…ASILYDDAAL (136 aa)) is N-terminal hotdog fold. Positions 1344–1654 (QQIIEESFNG…FRRYPRILLN (311 aa)) constitute a PKS/mFAS DH domain. Catalysis depends on His-1376, which acts as the Proton acceptor; for dehydratase activity. The segment at 1506–1654 (IANRFTRNMA…FRRYPRILLN (149 aa)) is C-terminal hotdog fold. Asp-1565 serves as the catalytic Proton donor; for dehydratase activity. The interval 1668–1726 (HAAASSTPAPRTKPEPVPVATPATAAAPVAQSPAAPASVTPAPAPAPAPGPTPAAAPAA) is disordered. Positions 1685-1708 (PVATPATAAAPVAQSPAAPASVTP) are enriched in low complexity. Over residues 1709–1721 (APAPAPAPGPTPA) the composition is skewed to pro residues. A Carrier domain is found at 1728–1805 (GESDSVAAKA…DLRSWLLEYY (78 aa)). At Ser-1765 the chain carries O-(pantetheine 4'-phosphoryl)serine.

The catalysed reaction is holo-[ACP] + 8 malonyl-CoA + 8 H(+) = atrochrysone carboxyl-[ACP] + 8 CO2 + 8 CoA + 2 H2O. The protein operates within secondary metabolite biosynthesis. Functionally, atrochrysone carboxylic acid synthase; part of the gene cluster that mediates the biosynthesis of monodictyphenone, a prenyl xanthone derivative. The pathway begins with the synthesis of atrochrysone thioester by the polyketide synthase (PKS) mdpG. The atrochrysone carboxyl ACP thioesterase mdpF then breaks the thioester bond and releases the atrochrysone carboxylic acid from mdpG. The atrochrysone carboxylic acid is then converted to atrochrysone which is further transformed into emodin anthrone. The next step is performed by the anthrone oxygenase mdpH that catalyzes the oxidation of emodinanthrone to emodin. Emodin is further modified to yield monodictyphenone via several steps involving mdpB, mdpC mdpJ, mdpK and mdpL. The short chain dehydrogenase mdpC converts the tautomers of emodin hydroquinone into the 3-hydroxy-3,4-dihydroan-thracen-1(2H)-one derivative. These enzymes with xptA, xptB and xptC are also proposed to be involved in the synthesis of shamixanthone from emodin. Especially, direct reduction of emodin by the short chain dehydrogenase mdpC followed by dehydration catalyzed by the scytalone dehydratase-like protein mdpB gives loss of oxygen and formation of chrysophanol intermediate in two simple steps. The polypeptide is Atrochrysone carboxylic acid synthase (Emericella nidulans (strain FGSC A4 / ATCC 38163 / CBS 112.46 / NRRL 194 / M139) (Aspergillus nidulans)).